Here is an 889-residue protein sequence, read N- to C-terminus: Alanine--tRNA ligase (889 aa).

Zn(2+) contacts are provided by His564, His568, Cys671, and His675.

This sequence belongs to the class-II aminoacyl-tRNA synthetase family. The cofactor is Zn(2+).

The protein resides in the cytoplasm. The enzyme catalyses tRNA(Ala) + L-alanine + ATP = L-alanyl-tRNA(Ala) + AMP + diphosphate. Its function is as follows. Catalyzes the attachment of alanine to tRNA(Ala) in a two-step reaction: alanine is first activated by ATP to form Ala-AMP and then transferred to the acceptor end of tRNA(Ala). Also edits incorrectly charged Ser-tRNA(Ala) and Gly-tRNA(Ala) via its editing domain. The sequence is that of Alanine--tRNA ligase from Pelagibacter ubique (strain HTCC1062).